The primary structure comprises 93 residues: uncharacterized protein (93 aa).

One can recognise a Sm domain in the interval 1 to 76 (MDSHTTEKRR…IQTIEPDESM (76 aa)).

As to quaternary structure, part of the core SMN complex at least composed of smn1, yip11/gem2, gem6, gem7 and gem8. Interacts with gem7; the interaction is direct.

In terms of biological role, the SMN complex catalyzes the assembly of small nuclear ribonucleoproteins (snRNPs), the building blocks of the spliceosome, and thereby plays an important role in the splicing of cellular pre-mRNAs. Most spliceosomal snRNPs contain a common set of Sm proteins smb1, smd1, smd2, smd3, sme1, smf1 and smg1 that assemble in a heptameric protein ring on the Sm site of the small nuclear RNA to form the core snRNP (Sm core). In the cytosol, the Sm proteins smd1, smd2, sme1, smf1 and smg1 (5Sm) are trapped in an inactive 6S pICln-Sm complex by the chaperone saf5. To complete assembly of core snRNPs, the SMN complex accepts 5Sm from saf5. Binding of snRNA inside 5Sm triggers eviction of the SMN complex, thereby allowing binding of smd3 and smb1 to complete assembly of the core snRNP. This is an uncharacterized protein from Schizosaccharomyces pombe (strain 972 / ATCC 24843) (Fission yeast).